The primary structure comprises 120 residues: Large ribosomal subunit protein uL18 (120 aa).

The protein belongs to the universal ribosomal protein uL18 family. Part of the 50S ribosomal subunit. Part of the 5S rRNA/L5/L18/L25 subcomplex. Contacts the 23S rRNA and 5S rRNA. Required for catalysis of RNase M5.

This is one of the proteins that bind and probably mediate the attachment of the 5S RNA into the large ribosomal subunit, where it forms part of the central protuberance. Functionally, required for correct processing of both the 5' and 3' ends of 5S rRNA precursor, which is does in conjunction with ribonuclease M5 (RNase M5, rnmV). Possibly folds the 5S rRNA precursor into the correct conformation, thus acting as a chaperone. The sequence is that of Large ribosomal subunit protein uL18 from Bacillus subtilis (strain 168).